Reading from the N-terminus, the 298-residue chain is Enoyl-CoA hydratase ACTT6 (298 aa).

The protein belongs to the enoyl-CoA hydratase/isomerase family.

It functions in the pathway mycotoxin biosynthesis. Enoyl-CoA hydratase; part of the gene clusters that mediate the biosynthesis of the host-selective toxins (HSTs) ACT-toxins responsible for brown spot of tangerine disease by the tangerine pathotype which affects tangerines and mandarins. ACT-toxins consist of three moieties, 9,10-epoxy-8-hydroxy-9-methyl-decatrienoic acid (EDA), valine and a polyketide. ACT-toxin I is toxic to both citrus and pear; toxin II the 5''-deoxy derivative of ACT-toxin I, is highly toxic to pear and slightly toxic to citrus. On cellular level, ACT-toxins affect plasma membrane of susceptible cells and cause a sudden increase in loss of K(+) after a few minutes of toxin treatment. The acyl-CoA ligase ACTT1, the hydrolase ACTT2, the enoyl-CoA hydratases ACTT3 and ACTT6, and the acyl-CoA synthetase ACTT5 are all involved in the biosynthesis of the AK-, AF- and ACT-toxin common 9,10-epoxy-8-hydroxy-9-methyl-decatrienoic acid (EDA) structural moiety. The exact role of each enzyme, and of additional enzymes identified within the AF-toxin clusters have still to be determined. On the other hand, ACTTS1 to ACTTS4 are specific to the tangerine pathotype. The function of ACTTS3 is to elongate the polyketide chain portion of ACT-toxin that is unique to this toxin. The enoyl-reductase ACTTS2 might complement the missing enoyl-reductase (ER) domain in ACTTS3 in the synthesis of the polyketide portion of ACT-toxin. The roles of the nonribosomal peptide synthetases-related proteins ACTTS1 and ACTTS4 have also still not been elucidated. The polypeptide is Enoyl-CoA hydratase ACTT6 (Alternaria alternata (Alternaria rot fungus)).